Reading from the N-terminus, the 348-residue chain is Selenide, water dikinase (348 aa).

Cysteine 17 is a catalytic residue. Residues lysine 20 and 48–50 (TRD) contribute to the ATP site. Aspartate 51 contributes to the Mg(2+) binding site. Residues aspartate 68, aspartate 91, and 139-141 (GHS) contribute to the ATP site. Aspartate 91 is a Mg(2+) binding site. Aspartate 227 contributes to the Mg(2+) binding site.

The protein belongs to the selenophosphate synthase 1 family. Class I subfamily. As to quaternary structure, homodimer. Mg(2+) is required as a cofactor.

It carries out the reaction hydrogenselenide + ATP + H2O = selenophosphate + AMP + phosphate + 2 H(+). In terms of biological role, synthesizes selenophosphate from selenide and ATP. This is Selenide, water dikinase from Yersinia pseudotuberculosis serotype I (strain IP32953).